A 370-amino-acid chain; its full sequence is Protein phosphatase 2C homolog 2 (370 aa).

Residues 23–291 enclose the PPM-type phosphatase domain; that stretch reads HFGVSHMQGW…DNMTICIVAF (269 aa). D63, G64, D233, and D282 together coordinate Mn(2+). 2 positions are modified to phosphoserine: S355 and S357.

It belongs to the PP2C family. As to quaternary structure, monomer. It depends on Mg(2+) as a cofactor. Requires Mn(2+) as cofactor.

It is found in the nucleus. Its subcellular location is the cytoplasm. The protein localises to the cytosol. The catalysed reaction is O-phospho-L-seryl-[protein] + H2O = L-seryl-[protein] + phosphate. It carries out the reaction O-phospho-L-threonyl-[protein] + H2O = L-threonyl-[protein] + phosphate. Its activity is regulated as follows. Activity is reduced when phosphosrylated at Ser-355/Ser-357. Its function is as follows. Dephosphorylating regulator for many key proteins. Has an important role in osmotic stability and cell shape control. It may negatively regulate the osmosensing signal transmitted through wis1 map kinase. This chain is Protein phosphatase 2C homolog 2 (ptc2), found in Schizosaccharomyces pombe (strain 972 / ATCC 24843) (Fission yeast).